Reading from the N-terminus, the 80-residue chain is Acyl carrier protein (80 aa).

The region spanning 4–79 (NSIEEKVRSI…DVVAYIEKVQ (76 aa)) is the Carrier domain. Serine 39 is modified (O-(pantetheine 4'-phosphoryl)serine).

Belongs to the acyl carrier protein (ACP) family. Post-translationally, 4'-phosphopantetheine is transferred from CoA to a specific serine of apo-ACP by AcpS. This modification is essential for activity because fatty acids are bound in thioester linkage to the sulfhydryl of the prosthetic group.

It localises to the cytoplasm. It functions in the pathway lipid metabolism; fatty acid biosynthesis. In terms of biological role, carrier of the growing fatty acid chain in fatty acid biosynthesis. This chain is Acyl carrier protein, found in Akkermansia muciniphila (strain ATCC BAA-835 / DSM 22959 / JCM 33894 / BCRC 81048 / CCUG 64013 / CIP 107961 / Muc).